The sequence spans 329 residues: Serpentine receptor class alpha-8 (329 aa).

A run of 6 helical transmembrane segments spans residues 26–46, 60–80, 141–161, 187–207, 231–251, and 273–293; these read VDLI…KMVL, FLNI…VVVI, IFVG…TGKL, TIHF…SVAL, VIES…FMFI, and FWVV…LLLI.

Belongs to the nematode receptor-like protein sra family.

It is found in the membrane. This Caenorhabditis elegans protein is Serpentine receptor class alpha-8 (sra-8).